The primary structure comprises 370 residues: Histidinol-phosphate aminotransferase 3 (370 aa).

Lysine 233 carries the post-translational modification N6-(pyridoxal phosphate)lysine.

It belongs to the class-II pyridoxal-phosphate-dependent aminotransferase family. Histidinol-phosphate aminotransferase subfamily. Homodimer. The cofactor is pyridoxal 5'-phosphate.

It carries out the reaction L-histidinol phosphate + 2-oxoglutarate = 3-(imidazol-4-yl)-2-oxopropyl phosphate + L-glutamate. It functions in the pathway amino-acid biosynthesis; L-histidine biosynthesis; L-histidine from 5-phospho-alpha-D-ribose 1-diphosphate: step 7/9. The protein is Histidinol-phosphate aminotransferase 3 of Burkholderia lata (strain ATCC 17760 / DSM 23089 / LMG 22485 / NCIMB 9086 / R18194 / 383).